A 345-amino-acid polypeptide reads, in one-letter code: Mycothiol acetyltransferase (345 aa).

N-acetyltransferase domains follow at residues 6-149 and 164-345; these read DTYE…KAME and FEVL…RGRL. Residue Glu-39 participates in 1D-myo-inositol 2-(L-cysteinylamino)-2-deoxy-alpha-D-glucopyranoside binding. 76–78 provides a ligand contact to acetyl-CoA; that stretch reads LAV. The 1D-myo-inositol 2-(L-cysteinylamino)-2-deoxy-alpha-D-glucopyranoside site is built by Glu-198, Lys-261, and Glu-277. Residues 281–283 and 288–294 each bind acetyl-CoA; these read VCL and RGRGLGQ. Tyr-315 lines the 1D-myo-inositol 2-(L-cysteinylamino)-2-deoxy-alpha-D-glucopyranoside pocket.

Belongs to the acetyltransferase family. MshD subfamily. As to quaternary structure, monomer.

The enzyme catalyses 1D-myo-inositol 2-(L-cysteinylamino)-2-deoxy-alpha-D-glucopyranoside + acetyl-CoA = mycothiol + CoA + H(+). Its function is as follows. Catalyzes the transfer of acetyl from acetyl-CoA to desacetylmycothiol (Cys-GlcN-Ins) to form mycothiol. This chain is Mycothiol acetyltransferase, found in Corynebacterium jeikeium (strain K411).